The primary structure comprises 299 residues: tRNA pseudouridine synthase B (299 aa).

Asp-38 acts as the Nucleophile in catalysis.

Belongs to the pseudouridine synthase TruB family. Type 1 subfamily.

It catalyses the reaction uridine(55) in tRNA = pseudouridine(55) in tRNA. In terms of biological role, responsible for synthesis of pseudouridine from uracil-55 in the psi GC loop of transfer RNAs. The sequence is that of tRNA pseudouridine synthase B from Alkaliphilus oremlandii (strain OhILAs) (Clostridium oremlandii (strain OhILAs)).